The following is a 156-amino-acid chain: Calglandulin (156 aa).

EF-hand domains are found at residues Glu8 to Asn43, Pro44 to Lys79, Asn82 to Pro117, and Leu118 to Lys153. Ca(2+)-binding residues include Asp131, Asp133, Asp135, Thr137, and Glu142.

Belongs to the calmodulin family. Calglandulin subfamily. As to expression, expressed by the venom gland.

Its subcellular location is the cytoplasm. May be involved in the cellular control mechanism of the secretion of toxins from the gland into the venom. The sequence is that of Calglandulin from Hoplocephalus stephensii (Stephens's banded snake).